The sequence spans 106 residues: Large ribosomal subunit protein uL24 (106 aa).

Over residues Glu-84–Arg-97 the composition is skewed to basic and acidic residues. The interval Glu-84–Lys-106 is disordered.

It belongs to the universal ribosomal protein uL24 family. As to quaternary structure, part of the 50S ribosomal subunit.

Functionally, one of two assembly initiator proteins, it binds directly to the 5'-end of the 23S rRNA, where it nucleates assembly of the 50S subunit. In terms of biological role, one of the proteins that surrounds the polypeptide exit tunnel on the outside of the subunit. This chain is Large ribosomal subunit protein uL24, found in Anaeromyxobacter sp. (strain K).